The primary structure comprises 269 residues: Energy-coupling factor transporter ATP-binding protein EcfA1 (269 aa).

In terms of domain architecture, ABC transporter spans I8–D242. G42 to S49 contributes to the ATP binding site.

Belongs to the ABC transporter superfamily. Energy-coupling factor EcfA family. Forms a stable energy-coupling factor (ECF) transporter complex composed of 2 membrane-embedded substrate-binding proteins (S component), 2 ATP-binding proteins (A component) and 2 transmembrane proteins (T component).

It is found in the cell membrane. ATP-binding (A) component of a common energy-coupling factor (ECF) ABC-transporter complex. Unlike classic ABC transporters this ECF transporter provides the energy necessary to transport a number of different substrates. The polypeptide is Energy-coupling factor transporter ATP-binding protein EcfA1 (Staphylococcus aureus (strain USA300)).